The chain runs to 475 residues: MKSYLLVPKESIETQARVGPRGTEQGERVLSRTTALRFAVANKAPDALFALGLRSATLPGARPPVSGQEERRRKGKGAKSARTGTRGADSSTPPMPGATVAEQTGAEPGSYRYMPLIGATMAHFYEDHTEKEARGELERDFEFIPDVVPLSFPGPVSAGQPGPRNRGMSSLAEREWPDECGVPLAHAQGIRGAGVMLGILDTGVDADHPEHAARVIQFRYVSLFPNSPHNPARDIRGFDPDGHGTHVCGIAAGVHHGVAPEVDLYVASVIESETIRTSLGRVAAGMEWLLHQFSRPENSTRPAVVNLSLGFPLMPPPGISEADYNLNLRALQTMIRRLLDSNVLPVVAAGNSGPDTVGYPAAFPESLAVGAVDFERNVATFSASGTVGRRVVPDIMGYGVNVYSSTERRCNNQAFYERMSGTSMAAPYVAGIAALYRCRAPDLTALEVRDLILSNAVKLPRSGTHKTGKGLAVFR.

Disordered stretches follow at residues 1-27 (MKSY…EQGE) and 57-106 (TLPG…QTGA). The Peptidase S8 domain occupies 165–475 (NRGMSSLAER…KTGKGLAVFR (311 aa)). Catalysis depends on charge relay system residues Asp-201, His-243, and Ser-423.

Belongs to the peptidase S8 family. Interacts with PopD in non-starving cells.

Its subcellular location is the cytoplasm. It is found in the periplasm. It localises to the secreted. With respect to regulation, in non-starving cells, secretion and protease activity are inhibited by formation of a cytoplasmic complex with PopD. In response to starvation, PopD is degraded in a RelA- and FtsH(D)-dependent manner, thereby releasing pre-formed PopC for secretion. Secreted and active during starvation, and rapidly degraded upon secretion. Secretion is significantly and reversibly reduced by carbonyl cyanide m-chlorophenyl hydrazine (CCCP), which dissipates or reduces the proton motive force (PMF), and by nigericin, which affects the pH gradient. Its function is as follows. Required for fruiting body formation, a multicellular developmental program that is induced in response to starvation. Acts as a subtilisin-like protease that directly cleaves the CsgA precursor protein (p25) on the cell surface to generate the intercellular C-signal protein (p17) in starving cells. Preferentially acts in cis, i.e. PopC secreted by a cell only cleaves p25 on that cell. May also be important for processing of other protein(s) that are important for development. The protein is Subtilisin-like protease PopC of Myxococcus xanthus (strain DK1622).